Here is a 331-residue protein sequence, read N- to C-terminus: UDP-GalNAc:beta-1,3-N-acetylgalactosaminyltransferase 1 (331 aa).

The Cytoplasmic segment spans residues 1–20; that stretch reads MAPAVLTALPNRMSLRSLKW. A helical; Signal-anchor for type II membrane protein membrane pass occupies residues 21–43; it reads SLLLLSLLSFLVIWYLSLPHYNV. Over 44–331 the chain is Lumenal; the sequence is IERVNWMYFY…VMLRNTTCHY (288 aa). N-linked (GlcNAc...) asparagine glycans are attached at residues asparagine 72, asparagine 154, asparagine 198, asparagine 212, and asparagine 326.

This sequence belongs to the glycosyltransferase 31 family. The cofactor is Mg(2+). In terms of tissue distribution, detected in brain, ovary, kidney, uterus and stomach. In ovary, specifically expressed in follicular granulosa cells and shows particularly strong expression at later stages of follicle development.

It localises to the golgi apparatus membrane. It carries out the reaction a globoside Gb3Cer (d18:1(4E)) + UDP-N-acetyl-alpha-D-galactosamine = a globoside Gb4Cer (d18:1(4E)) + UDP + H(+). Its pathway is protein modification; protein glycosylation. Its function is as follows. Transfers N-acetylgalactosamine onto globotriaosylceramide. Plays a critical role in preimplantation stage embryonic development. The chain is UDP-GalNAc:beta-1,3-N-acetylgalactosaminyltransferase 1 from Mus musculus (Mouse).